Reading from the N-terminus, the 113-residue chain is Hydrogenase maturation factor HypA (113 aa).

Histidine 2 is a Ni(2+) binding site. Zn(2+)-binding residues include cysteine 70, cysteine 73, cysteine 86, and cysteine 88.

The protein belongs to the HypA/HybF family.

Functionally, involved in the maturation of [NiFe] hydrogenases. Required for nickel insertion into the metal center of the hydrogenase. The sequence is that of Hydrogenase maturation factor HypA from Nostoc punctiforme (strain ATCC 29133 / PCC 73102).